We begin with the raw amino-acid sequence, 532 residues long: MDITKENYYEELDNIAKNIKDSCFISFDAEFSAILTKESFKYSLFDTNEERYNKYKTQISTMKMMQVGLTMFQYDRELDAYLATGYTFHLCPQLIGTINQSLIFQASTLKFLCKHNFDFNKFIYEGLPYLSKSDEALLNRYRIENNLFDYVSESLEFDEEKQINQCSSEVSKWLSSSIEDTMYLDIDNAICRYLLHLELRQRYPGILTTDSLGNSKKILIYRDKNVEGAKNAPIAILEDNLIAYLLGFLHVIKLLETHKKPIVGHNMFLDMLFLHNQFIGPLPDSYTMFKKNINSVFPTIFDTKYISHAMSKKLTFSESWKSNALQDLYEFFAERKCKKLEYGINIVRLTTPFDIKQSYHEAGWDAYCSGYCFIRLGHWAACENRGKSHVIGPREKLAALAPYCNKVNVIRGGVSYMNFSENDPPRNRPVLLHVKCLKDTVIDVEKVASLLGSFGSIDIKPCGKRAALVATGAQFMVDKILKTYENNRDYRISKYSVYKHSVAGRFAIWSGSIVTGGLALYLIHKKFKSILL.

D28, E30, D270, and D365 together coordinate Mg(2+). The chain crosses the membrane as a helical span at residues 503–523; that stretch reads AGRFAIWSGSIVTGGLALYLI.

Belongs to the CAF1 family. In terms of assembly, interacts with Papi/Tdrkh; interaction takes place on the mitochondrial surface and recruits PNLDC1/trimmer to PIWI-bound pre-piRNAs. Mg(2+) is required as a cofactor.

The protein resides in the mitochondrion outer membrane. Functionally, 3'-5' exonuclease that specifically cleaves precursor piRNAs (pre-piRNAs) at their 3' ends. Trims pre-piRNAs to their mature size, a process required for piRNAs maturation and stabilization, and subsequent pre-piRNAs 2'-O-methylation. The piRNA metabolic process mediates the repression of transposable elements during meiosis by forming complexes composed of piRNAs and Piwi proteins and govern the methylation and subsequent repression of transposons. The chain is Pre-piRNA 3'-exonuclease trimmer from Bombyx mori (Silk moth).